We begin with the raw amino-acid sequence, 623 residues long: Leucine aminopeptidase 2 (623 aa).

The interval 1–23 is disordered; that stretch reads MRRCTKNSRSTNPPRDPNTLSNY. Residues 7-23 show a composition bias toward polar residues; it reads NSRSTNPPRDPNTLSNY. A peptide contacts are provided by residues 145–147 and 277–282; these read QCQ and PYGGME. Histidine 306 contributes to the Zn(2+) binding site. The active-site Proton acceptor is the glutamate 307. Residues histidine 310 and glutamate 329 each contribute to the Zn(2+) site. Tyrosine 394 serves as the catalytic Proton donor.

This sequence belongs to the peptidase M1 family. It depends on Zn(2+) as a cofactor.

It is found in the cytoplasm. It localises to the nucleus. The catalysed reaction is an epoxide + H2O = an ethanediol. In terms of biological role, aminopeptidase that preferentially cleaves di- and tripeptides. Also has low epoxide hydrolase activity (in vitro). Can hydrolyze the epoxide leukotriene LTA(4) but it forms preferentially 5,6-dihydroxy-7,9,11,14-eicosatetraenoic acid rather than the cytokine leukotriene B(4) as the product compared to the homologous mammalian enzyme (in vitro). The sequence is that of Leucine aminopeptidase 2 from Ajellomyces capsulatus (strain NAm1 / WU24) (Darling's disease fungus).